We begin with the raw amino-acid sequence, 65 residues long: Putative antitoxin MJECL31 (65 aa).

This sequence belongs to the UPF0165 family.

In terms of biological role, possibly the antitoxin component of a type II toxin-antitoxin (TA) system. This Methanocaldococcus jannaschii (strain ATCC 43067 / DSM 2661 / JAL-1 / JCM 10045 / NBRC 100440) (Methanococcus jannaschii) protein is Putative antitoxin MJECL31.